We begin with the raw amino-acid sequence, 291 residues long: Small ribosomal subunit protein uS2 (291 aa).

Residues 256 to 291 form a disordered region; that stretch reads STTAPPNWEATGGDWATSTAPAEGWAGDAPAGETKW.

The protein belongs to the universal ribosomal protein uS2 family. As to quaternary structure, component of the small ribosomal subunit. Mature ribosomes consist of a small (40S) and a large (60S) subunit. The 40S subunit contains about 33 different proteins and 1 molecule of RNA (18S). The 60S subunit contains about 49 different proteins and 3 molecules of RNA (25S, 5.8S and 5S). Interacts with RPS21.

The protein resides in the cytoplasm. Functionally, required for the assembly and/or stability of the 40S ribosomal subunit. Required for the processing of the 20S rRNA-precursor to mature 18S rRNA in a late step of the maturation of 40S ribosomal subunits. The sequence is that of Small ribosomal subunit protein uS2 from Coccidioides immitis (strain RS) (Valley fever fungus).